We begin with the raw amino-acid sequence, 259 residues long: Probable ABC transporter permease protein RF_0080 (259 aa).

5 helical membrane passes run 13 to 35, 49 to 69, 148 to 168, 195 to 215, and 237 to 257; these read TIKF…SSII, LFIG…SGAV, VIAA…IGVM, PIDV…ISII, and AVVN…ELFF.

It belongs to the MlaE permease family.

The protein resides in the cell inner membrane. Its function is as follows. Could be part of an ABC transporter complex. In Rickettsia felis (strain ATCC VR-1525 / URRWXCal2) (Rickettsia azadi), this protein is Probable ABC transporter permease protein RF_0080.